Reading from the N-terminus, the 398-residue chain is Lipase member K (398 aa).

Positions 1-19 (MWWLLATTCCVLLSGPIDG) are cleaved as a signal peptide. Positions 78–377 (VVYLQHGLIA…HYNHMDFYLG (300 aa)) constitute an AB hydrolase-1 domain. Catalysis depends on S171, which acts as the Nucleophile. Residues C245 and C254 are joined by a disulfide bond. N-linked (GlcNAc...) asparagine glycans are attached at residues N270 and N326. Catalysis depends on charge relay system residues D342 and H371.

It belongs to the AB hydrolase superfamily. Lipase family.

It localises to the secreted. Functionally, plays a highly specific role in the last step of keratinocyte differentiation. May have an essential function in lipid metabolism of the most differentiated epidermal layers. This is Lipase member K (Lipk) from Mus musculus (Mouse).